Here is a 317-residue protein sequence, read N- to C-terminus: OVARIAN TUMOR DOMAIN-containing deubiquitinating enzyme 4 (317 aa).

One can recognise an OTU domain in the interval 168–306 (YSIIGIPGDG…FGHYDALLLH (139 aa)). Asp-176 is an active-site residue. Residue Cys-179 is the Nucleophile of the active site. His-299 is a catalytic residue.

This sequence belongs to the peptidase C65 family.

The protein resides in the cytoplasm. The enzyme catalyses Thiol-dependent hydrolysis of ester, thioester, amide, peptide and isopeptide bonds formed by the C-terminal Gly of ubiquitin (a 76-residue protein attached to proteins as an intracellular targeting signal).. Hydrolase that can remove conjugated ubiquitin from proteins in vitro and may therefore play an important regulatory role at the level of protein turnover by preventing degradation. Cysteine protease with a preference for 'Lys-63' over 'Lys-48'-linked over 'Met-1' ubiquitin (UB) tetramers (e.g. Ub3 and Ub4) as substrates. Also cleaves RUB-GST fusion. This Arabidopsis thaliana (Mouse-ear cress) protein is OVARIAN TUMOR DOMAIN-containing deubiquitinating enzyme 4.